A 274-amino-acid chain; its full sequence is Large ribosomal subunit protein uL2 (274 aa).

A disordered region spans residues 200–274 (HALEKSGKAG…SKYIIERRKK (75 aa)). Composition is skewed to basic residues over residues 207 to 220 (KAGRSRWLGRRPRN) and 255 to 274 (LKTRAPKKHSSKYIIERRKK).

The protein belongs to the universal ribosomal protein uL2 family. As to quaternary structure, part of the 50S ribosomal subunit. Forms a bridge to the 30S subunit in the 70S ribosome.

Functionally, one of the primary rRNA binding proteins. Required for association of the 30S and 50S subunits to form the 70S ribosome, for tRNA binding and peptide bond formation. It has been suggested to have peptidyltransferase activity; this is somewhat controversial. Makes several contacts with the 16S rRNA in the 70S ribosome. This is Large ribosomal subunit protein uL2 from Parabacteroides distasonis (strain ATCC 8503 / DSM 20701 / CIP 104284 / JCM 5825 / NCTC 11152).